Consider the following 375-residue polypeptide: 23S rRNA (uracil(747)-C(5))-methyltransferase RlmC (375 aa).

Cys3, Cys11, Cys14, and Cys87 together coordinate [4Fe-4S] cluster. S-adenosyl-L-methionine is bound by residues Gln212, Phe241, Glu262, and Asn307. The active-site Nucleophile is Cys334.

It belongs to the class I-like SAM-binding methyltransferase superfamily. RNA M5U methyltransferase family. RlmC subfamily.

The enzyme catalyses uridine(747) in 23S rRNA + S-adenosyl-L-methionine = 5-methyluridine(747) in 23S rRNA + S-adenosyl-L-homocysteine + H(+). Functionally, catalyzes the formation of 5-methyl-uridine at position 747 (m5U747) in 23S rRNA. In Shigella dysenteriae serotype 1 (strain Sd197), this protein is 23S rRNA (uracil(747)-C(5))-methyltransferase RlmC.